The primary structure comprises 298 residues: Ribosomal protein uL3 glutamine methyltransferase (298 aa).

The protein belongs to the protein N5-glutamine methyltransferase family. PrmB subfamily.

The catalysed reaction is L-glutaminyl-[ribosomal protein uL3] + S-adenosyl-L-methionine = N(5)-methyl-L-glutaminyl-[ribosomal protein uL3] + S-adenosyl-L-homocysteine + H(+). In terms of biological role, methylates large ribosomal subunit protein uL3 on a specific glutamine residue. The chain is Ribosomal protein uL3 glutamine methyltransferase from Bordetella pertussis (strain Tohama I / ATCC BAA-589 / NCTC 13251).